The following is a 140-amino-acid chain: Envelope protein A28 homolog (140 aa).

Residues 1 to 21 (MNAITIFFIILSTVAVCIIIF) form a helical; Signal-anchor for type II membrane protein membrane-spanning segment. The Virion surface portion of the chain corresponds to 22-140 (QLYSIYLNYD…KECIFLKSMF (119 aa)).

It belongs to the poxviridae A28 protein family. Contains two intramolecular disulfide bonds. They are created by the viral disulfide bond formation pathway, a poxvirus-specific pathway that operates on the cytoplasmic side of the MV membranes.

It is found in the virion membrane. Functionally, envelope protein required for virus entry into host cell and for cell-cell fusion (syncytium formation). The polypeptide is Envelope protein A28 homolog (Bos taurus (Bovine)).